A 443-amino-acid polypeptide reads, in one-letter code: Putative F-box/FBD/LRR-repeat protein At5g22670 (443 aa).

The 47-residue stretch at Q10–N56 folds into the F-box domain. LRR repeat units lie at residues S139–D165, N166–R191, Y219–D243, N275–G300, and Y325–L353. The FBD domain occupies L361–L412.

The chain is Putative F-box/FBD/LRR-repeat protein At5g22670 from Arabidopsis thaliana (Mouse-ear cress).